A 213-amino-acid chain; its full sequence is Adenylate kinase (213 aa).

10–15 serves as a coordination point for ATP; that stretch reads GAGKGT. The segment at 30 to 59 is NMP; it reads STGDMFRAAMANQTEMGVLAKSYIDKGDLV. AMP is bound by residues Thr-31, Arg-36, 57 to 59, 86 to 89, and Gln-93; these read DLV and GYPR. An LID region spans residues 127–160; sequence GRIINKKTGETFHKIFNPPVGDYKEEDFYQREDD. Residues Arg-128 and 137–138 contribute to the ATP site; that span reads TF. AMP contacts are provided by Arg-157 and Arg-168. Lys-196 contacts ATP.

The protein belongs to the adenylate kinase family. As to quaternary structure, monomer.

Its subcellular location is the cytoplasm. It carries out the reaction AMP + ATP = 2 ADP. It participates in purine metabolism; AMP biosynthesis via salvage pathway; AMP from ADP: step 1/1. Its function is as follows. Catalyzes the reversible transfer of the terminal phosphate group between ATP and AMP. Plays an important role in cellular energy homeostasis and in adenine nucleotide metabolism. This is Adenylate kinase from Streptococcus equi subsp. zooepidemicus (strain H70).